Consider the following 166-residue polypeptide: NAD(P)H-quinone oxidoreductase subunit I, chloroplastic (166 aa).

2 consecutive 4Fe-4S ferredoxin-type domains span residues G55–K84 and L95–E124. The [4Fe-4S] cluster site is built by C64, C67, C70, C74, C104, C107, C110, and C114.

It belongs to the complex I 23 kDa subunit family. In terms of assembly, NDH is composed of at least 16 different subunits, 5 of which are encoded in the nucleus. [4Fe-4S] cluster is required as a cofactor.

The protein localises to the plastid. It is found in the chloroplast thylakoid membrane. The enzyme catalyses a plastoquinone + NADH + (n+1) H(+)(in) = a plastoquinol + NAD(+) + n H(+)(out). The catalysed reaction is a plastoquinone + NADPH + (n+1) H(+)(in) = a plastoquinol + NADP(+) + n H(+)(out). NDH shuttles electrons from NAD(P)H:plastoquinone, via FMN and iron-sulfur (Fe-S) centers, to quinones in the photosynthetic chain and possibly in a chloroplast respiratory chain. The immediate electron acceptor for the enzyme in this species is believed to be plastoquinone. Couples the redox reaction to proton translocation, and thus conserves the redox energy in a proton gradient. The protein is NAD(P)H-quinone oxidoreductase subunit I, chloroplastic of Espeletia timotensis (Andean giant rosette).